Reading from the N-terminus, the 298-residue chain is 4-hydroxy-tetrahydrodipicolinate synthase (298 aa).

T48 contributes to the pyruvate binding site. Y137 (proton donor/acceptor) is an active-site residue. K166 serves as the catalytic Schiff-base intermediate with substrate. I207 is a binding site for pyruvate.

Belongs to the DapA family. Homotetramer; dimer of dimers.

Its subcellular location is the cytoplasm. It catalyses the reaction L-aspartate 4-semialdehyde + pyruvate = (2S,4S)-4-hydroxy-2,3,4,5-tetrahydrodipicolinate + H2O + H(+). The protein operates within amino-acid biosynthesis; L-lysine biosynthesis via DAP pathway; (S)-tetrahydrodipicolinate from L-aspartate: step 3/4. Functionally, catalyzes the condensation of (S)-aspartate-beta-semialdehyde [(S)-ASA] and pyruvate to 4-hydroxy-tetrahydrodipicolinate (HTPA). The polypeptide is 4-hydroxy-tetrahydrodipicolinate synthase (Campylobacter hominis (strain ATCC BAA-381 / DSM 21671 / CCUG 45161 / LMG 19568 / NCTC 13146 / CH001A)).